We begin with the raw amino-acid sequence, 276 residues long: Ribonuclease T2 (276 aa).

An N-terminal signal peptide occupies residues 1–17 (MGMLALGAMQLAAGAVF). Disulfide bonds link C22-C41, C30-C77, C40-C143, C85-C135, and C208-C242. The N-linked (GlcNAc...) asparagine glycan is linked to N32. H70 is a catalytic residue. N93 carries N-linked (GlcNAc...) asparagine glycosylation. Residues E128 and H132 contribute to the active site. N-linked (GlcNAc...) asparagine glycosylation is present at N256.

Belongs to the RNase T2 family.

The enzyme catalyses a ribonucleotidyl-ribonucleotide-RNA + H2O = a 3'-end 3'-phospho-ribonucleotide-RNA + a 5'-end dephospho-ribonucleoside-RNA + H(+). The chain is Ribonuclease T2 (rntB) from Aspergillus oryzae (strain ATCC 42149 / RIB 40) (Yellow koji mold).